A 224-amino-acid polypeptide reads, in one-letter code: Proteasome subunit beta (224 aa).

A propeptide spans 1–6 (removed in mature form; by autocatalysis); it reads MDVMKG. The active-site Nucleophile is T7.

The protein belongs to the peptidase T1B family. As to quaternary structure, the 20S proteasome core is composed of 14 alpha and 14 beta subunits that assemble into four stacked heptameric rings, resulting in a barrel-shaped structure. The two inner rings, each composed of seven catalytic beta subunits, are sandwiched by two outer rings, each composed of seven alpha subunits. The catalytic chamber with the active sites is on the inside of the barrel. Has a gated structure, the ends of the cylinder being occluded by the N-termini of the alpha-subunits. Is capped at one or both ends by the proteasome regulatory ATPase, PAN.

The protein localises to the cytoplasm. It catalyses the reaction Cleavage of peptide bonds with very broad specificity.. The formation of the proteasomal ATPase PAN-20S proteasome complex, via the docking of the C-termini of PAN into the intersubunit pockets in the alpha-rings, triggers opening of the gate for substrate entry. Interconversion between the open-gate and close-gate conformations leads to a dynamic regulation of the 20S proteasome proteolysis activity. Functionally, component of the proteasome core, a large protease complex with broad specificity involved in protein degradation. This chain is Proteasome subunit beta, found in Methanocaldococcus fervens (strain DSM 4213 / JCM 15782 / AG86) (Methanococcus fervens).